Consider the following 156-residue polypeptide: Small ribosomal subunit protein uS7 (156 aa).

It belongs to the universal ribosomal protein uS7 family. In terms of assembly, part of the 30S ribosomal subunit. Contacts proteins S9 and S11.

In terms of biological role, one of the primary rRNA binding proteins, it binds directly to 16S rRNA where it nucleates assembly of the head domain of the 30S subunit. Is located at the subunit interface close to the decoding center, probably blocks exit of the E-site tRNA. The polypeptide is Small ribosomal subunit protein uS7 (Phytoplasma australiense).